Reading from the N-terminus, the 382-residue chain is Mannitol-1-phosphate 5-dehydrogenase (382 aa).

3–14 lines the NAD(+) pocket; that stretch reads ALHFGAGNIGRG.

The protein belongs to the mannitol dehydrogenase family.

The enzyme catalyses D-mannitol 1-phosphate + NAD(+) = beta-D-fructose 6-phosphate + NADH + H(+). The sequence is that of Mannitol-1-phosphate 5-dehydrogenase (mtlD) from Klebsiella pneumoniae.